Here is a 621-residue protein sequence, read N- to C-terminus: uncharacterized protein (621 aa).

The next 3 helical transmembrane spans lie at 240-260, 548-568, and 587-607; these read FFDA…NLLW, LGIV…VWTV, and VIIG…LTFM.

The protein localises to the cell membrane. This is an uncharacterized protein from Mycoplasma pneumoniae (strain ATCC 29342 / M129 / Subtype 1) (Mycoplasmoides pneumoniae).